We begin with the raw amino-acid sequence, 959 residues long: Glycine dehydrogenase (decarboxylating) (959 aa).

The residue at position 707 (Lys-707) is an N6-(pyridoxal phosphate)lysine.

Belongs to the GcvP family. The glycine cleavage system is composed of four proteins: P, T, L and H. Pyridoxal 5'-phosphate serves as cofactor.

It catalyses the reaction N(6)-[(R)-lipoyl]-L-lysyl-[glycine-cleavage complex H protein] + glycine + H(+) = N(6)-[(R)-S(8)-aminomethyldihydrolipoyl]-L-lysyl-[glycine-cleavage complex H protein] + CO2. Its function is as follows. The glycine cleavage system catalyzes the degradation of glycine. The P protein binds the alpha-amino group of glycine through its pyridoxal phosphate cofactor; CO(2) is released and the remaining methylamine moiety is then transferred to the lipoamide cofactor of the H protein. This Photobacterium profundum (strain SS9) protein is Glycine dehydrogenase (decarboxylating).